The primary structure comprises 296 residues: Putative gluconeogenesis factor (296 aa).

The protein belongs to the gluconeogenesis factor family.

It localises to the cytoplasm. Functionally, required for morphogenesis under gluconeogenic growth conditions. The chain is Putative gluconeogenesis factor from Vibrio cholerae serotype O1 (strain ATCC 39315 / El Tor Inaba N16961).